Here is a 776-residue protein sequence, read N- to C-terminus: MASLIYRQLLANSYAVDLSDEIQSVGSEKNQRVTVDPGPFAQTGYAPVNRGPGEVNDSTVVQPVLDGPYQPAPFDLPVGNRMLLAPTGPGVVVEGTDNSGRWLSVILIEPGVTSETRTYTMFGSSKQVLVSNVSDTKWKLFEMMKTAVDGDYAEWGTLLSDIKIYGMMKYGERLFIYEGETPNARTKGYIVTNYTSVEVRPYSDFYIISRSQESACTEYINNGLPPIQNTRNVVPLAISSRSIKPRKVQPNEDIVVSKTSLWKELQYNRDIIIRFRFDNSIIKAGGLGYKWAEISFKAANYQYNYISDGEEVTAHTTCSVNGVNDFSFNGGSLPTDFAISRYEVIKENSYVYVHYWDDSQAFRNMVYVRSLAANLNDVMCSGGDYSFALLVGQWPVMKGGAVTLHTAGVTLSTQFTDFVSLNSLRFRFRLSVEEPSFTITRTRVSKLYGLPAANPNGGREYYEVAGRFSLISLVPSNDDYQTPIMNSVTVRQDLERRLNELREEFNNLSQEIAVSQLIDLAILPLDMFSMFSGIEGTVNAAKSMATNVIRKFKSSKLASSVSMLTDSLSDAASSISRSTSIRSIGSTASAWTNISKQTQDAVNEVATISSQLSQISGKLRLKEITTQTEGMSFDDISAAVLKANIDRSIQVDKNALPDVITEASEKFIRNRAYRVIDGDEAFEASTDGRFFAYKVETLEEMPFDIEKFADLVTRSPVISAIIDFKTLKNLNDNYGITREQAFNLLRSNPKVLRGFMDQNNPIIKNRIEQLIMQCRL.

A spike head region spans residues 65–224; sequence LDGPYQPAPF…ACTEYINNGL (160 aa). The segment at 248 to 479 is spike body and stalk (antigen domain); the sequence is VQPNEDIVVS…LISLVPSNDD (232 aa). The DGE motif; interaction with ITGA2/ITGB1 heterodimer motif lies at 308 to 310; sequence DGE. C318 and C380 are oxidised to a cystine. A hydrophobic; possible role in virus entry into host cell region spans residues 389–409; that stretch reads LLVGQWPVMKGGAVTLHTAGV. The YGL motif; interaction with ITGA4 motif lies at 448-450; that stretch reads YGL. The stretch at 484 to 518 forms a coiled coil; the sequence is IMNSVTVRQDLERRLNELREEFNNLSQEIAVSQLI. Residues 510-776 are spike foot; sequence QEIAVSQLID…IEQLIMQCRL (267 aa).

The protein belongs to the rotavirus VP4 family. In terms of assembly, homotrimer. VP4 adopts a dimeric appearance above the capsid surface, while forming a trimeric base anchored inside the capsid layer. Only hints of the third molecule are observed above the capsid surface. It probably performs a series of molecular rearrangements during viral entry. Prior to trypsin cleavage, it is flexible. The priming trypsin cleavage triggers its rearrangement into rigid spikes with approximate two-fold symmetry of their protruding parts. After an unknown second triggering event, cleaved VP4 may undergo another rearrangement, in which two VP5* subunits fold back on themselves and join a third subunit to form a tightly associated trimer, shaped like a folded umbrella. Interacts with VP6. Interacts with VP7. As to quaternary structure, homotrimer. The trimer is coiled-coil stabilized by its C-terminus, however, its N-terminus, known as antigen domain or 'body', seems to be flexible allowing it to self-associate either as a dimer or a trimer. In terms of processing, proteolytic cleavage by trypsin results in activation of VP4 functions and greatly increases infectivity. The penetration into the host cell is dependent on trypsin treatment of VP4. It produces two peptides, VP5* and VP8* that remain associated with the virion. Cleavage of VP4 by trypsin probably occurs in vivo in the lumen of the intestine prior to infection of enterocytes. Trypsin seems to be incorporated into the three-layered viral particles but remains inactive as long as the viral outer capsid is intact and would only be activated upon the solubilization of the latter.

It localises to the virion. The protein resides in the host rough endoplasmic reticulum. Its subcellular location is the host cell membrane. The protein localises to the host cytoplasm. It is found in the host cytoskeleton. It localises to the host endoplasmic reticulum-Golgi intermediate compartment. Its function is as follows. Spike-forming protein that mediates virion attachment to the host epithelial cell receptors and plays a major role in cell penetration, determination of host range restriction and virulence. Rotavirus attachment and entry into the host cell probably involves multiple sequential contacts between the outer capsid proteins VP4 and VP7, and the cell receptors. It is subsequently lost, together with VP7, following virus entry into the host cell. Following entry into the host cell, low intracellular or intravesicular Ca(2+) concentration probably causes the calcium-stabilized VP7 trimers to dissociate from the virion. This step is probably necessary for the membrane-disrupting entry step and the release of VP4, which is locked onto the virion by VP7. During the virus exit from the host cell, VP4 seems to be required to target the newly formed virions to the host cell lipid rafts. Functionally, forms the spike 'foot' and 'body' and acts as a membrane permeabilization protein that mediates release of viral particles from endosomal compartments into the cytoplasm. During entry, the part of VP5* that protrudes from the virus folds back on itself and reorganizes from a local dimer to a trimer. This reorganization may be linked to membrane penetration by exposing VP5* hydrophobic region. In integrin-dependent strains, VP5* targets the integrin heterodimer ITGA2/ITGB1 for cell attachment. In terms of biological role, forms the head of the spikes and mediates the recognition of specific host cell surface glycans. It is the viral hemagglutinin and an important target of neutralizing antibodies. In sialic acid-dependent strains, VP8* binds to host cell sialic acid, most probably a ganglioside, providing the initial contact. In some other strains, VP8* mediates the attachment to histo-blood group antigens (HBGAs) for viral entry. The protein is Outer capsid protein VP4 of Bos taurus (Bovine).